A 320-amino-acid chain; its full sequence is o-succinylbenzoate synthase (320 aa).

The active-site Proton donor is the Lys133. Mg(2+) contacts are provided by Asp161, Glu190, and Asp213. The active-site Proton acceptor is the Lys235.

It belongs to the mandelate racemase/muconate lactonizing enzyme family. MenC type 1 subfamily. The cofactor is a divalent metal cation.

It carries out the reaction (1R,6R)-6-hydroxy-2-succinyl-cyclohexa-2,4-diene-1-carboxylate = 2-succinylbenzoate + H2O. It participates in quinol/quinone metabolism; 1,4-dihydroxy-2-naphthoate biosynthesis; 1,4-dihydroxy-2-naphthoate from chorismate: step 4/7. The protein operates within quinol/quinone metabolism; menaquinone biosynthesis. Converts 2-succinyl-6-hydroxy-2,4-cyclohexadiene-1-carboxylate (SHCHC) to 2-succinylbenzoate (OSB). The sequence is that of o-succinylbenzoate synthase from Salmonella choleraesuis (strain SC-B67).